Consider the following 319-residue polypeptide: Annexin A4 (319 aa).

Thr-7 is subject to Phosphothreonine. Ser-12 carries the phosphoserine modification. 4 Annexin repeats span residues 14-85 (FNAT…GMMT), 86-157 (PTVL…SLTA), 169-241 (ALVR…AIVK), and 245-316 (NKPA…ILCG). N6-acetyllysine occurs at positions 213, 293, and 300.

It belongs to the annexin family.

It localises to the zymogen granule membrane. In terms of biological role, calcium/phospholipid-binding protein which promotes membrane fusion and is involved in exocytosis. The protein is Annexin A4 (Anxa4) of Rattus norvegicus (Rat).